Reading from the N-terminus, the 37-residue chain is M-oxotoxin-Ot2d (37 aa).

Expressed by the venom gland.

Its subcellular location is the secreted. Disrupts biological membranes, particularly those rich in phosphocholine. Has antimicrobial activity against Gram-negative bacterium E.coli, Gram-positive bacteria B.subtilis and S.aureus, and hemolytic activity against sheep, pig and guinea pig red blood cells. Has insecticidal activity against S.frugiperda ovarian cells by opening non-selective ion channels. Enhances the insecticidal activity of spider venom neurotoxic peptides. This chain is M-oxotoxin-Ot2d, found in Oxyopes takobius (Lynx spider).